Here is a 67-residue protein sequence, read N- to C-terminus: Beta-defensin 1 (67 aa).

The signal sequence occupies residues 1–22 (MRIHYLLFAVLFLFLMPVPGEG). 3 cysteine pairs are disulfide-bonded: Cys-33/Cys-62, Cys-40/Cys-55, and Cys-45/Cys-63.

Monomer. Homodimer. Highly expressed in tongue, nasopharyngeal mucosa and skin, and to a lower extent in the Eustachian tube, lung and trachea.

It localises to the secreted. It is found in the membrane. In terms of biological role, has antibacterial activity against Gram-positive bacterium S.pneumoniae Serotype 14. Is also active against Gram-negative bacteria M.catarrhalis 1857, and non-typeable H.influenzae strains 86-028NP and 1128. Has antifungal activity against C.albicans. May have a role in maintaining sterility in the middle ear. May act as a ligand for C-C chemokine receptor CCR6. Positively regulates the sperm motility and bactericidal activity in a CCR6-dependent manner. Binds to CCR6 and triggers Ca2+ mobilization in the sperm which is important for its motility. The polypeptide is Beta-defensin 1 (DEFB1) (Chinchilla lanigera (Long-tailed chinchilla)).